The primary structure comprises 186 residues: TATA-box-binding protein E (186 aa).

2 consecutive repeat copies span residues 10–86 and 101–179.

Belongs to the TBP family.

General factor that plays a role in the activation of archaeal genes transcribed by RNA polymerase. Binds specifically to the TATA box promoter element which lies close to the position of transcription initiation. The sequence is that of TATA-box-binding protein E (tbpE) from Halobacterium salinarum (strain ATCC 700922 / JCM 11081 / NRC-1) (Halobacterium halobium).